Reading from the N-terminus, the 147-residue chain is 16 kDa heat shock protein B (147 aa).

One can recognise a sHSP domain in the interval 29–141 (NEAGSTYPPY…APSAFRSAAA (113 aa)).

Belongs to the small heat shock protein (HSP20) family.

The polypeptide is 16 kDa heat shock protein B (ibpB) (Azotobacter vinelandii).